A 138-amino-acid polypeptide reads, in one-letter code: Superoxide dismutase [Mn] (138 aa).

Mn(2+) is bound by residues Ser-1, His-49, Asp-133, and His-137.

It belongs to the iron/manganese superoxide dismutase family. Requires Mn(2+) as cofactor.

The enzyme catalyses 2 superoxide + 2 H(+) = H2O2 + O2. Its function is as follows. Destroys superoxide anion radicals which are normally produced within the cells and which are toxic to biological systems. In Mycobacterium marinum, this protein is Superoxide dismutase [Mn] (sodA).